The primary structure comprises 244 residues: Protein TIFY 10b (244 aa).

Residues 97–132 form the Tify domain; sequence QEPEKRQLTIFYGGKVLVFNDFPADKAKGLMQLASK. The disordered stretch occupies residues 174–244; it reads QKPARANASD…AVVKPIERGQ (71 aa). Residues 185–210 carry the Jas motif; that stretch reads PIARKASLHRFLEKRKDRLNAKTPYQ. Positions 187–194 match the Nuclear localization signal motif; the sequence is ARKASLHR. Positions 194–204 are enriched in basic and acidic residues; the sequence is RFLEKRKDRLN.

It belongs to the TIFY/JAZ family. As to quaternary structure, interacts with BHLH148. Interacts with COI1A and COI1B in a coronatine-dependent manner. Coronatine is an analog of jasmonoyl isoleucine (JA-Ile). In terms of processing, ubiquitinated. Targeted for degradation by the SCF(COI1) E3 ubiquitin ligase-proteasome pathway during jasmonate signaling.

The protein localises to the nucleus. Repressor of jasmonate responses. This chain is Protein TIFY 10b, found in Oryza sativa subsp. japonica (Rice).